Reading from the N-terminus, the 525-residue chain is MANSSIFYKDNESDYESSTVGPDSSRRTSWLSSSFTASPSCSSISHLSNHGLNSYNQSKPHKANQVAWEAMARLRRCCGRAVGLEHFRLLKRLGSGDIGSVYLCQIRGSPETAFYAMKVVDKEAVAVKKKLGRAEMEKKILGMLDHPFCPTLYAAFEASHYSFLVMEYCPGGDLYAVRLRQPSKRFTISSTRFYAAETLVALEYLHMMGIVYRDLKPENVLIREDGHVMLSDFDLSFKCDVVPQFLSDNDRDRGHQEDDDDISIRRKCSTPSCTTTPLNPVISCFSPTSSRRRKKNVVTTTIHENAAGTSDSVKSNDVSRTFSRSPSSCSRVSNGLRDISGGCPSIFAEPINARSKSFVGTHEYLAPEVISGQGHGSAVDWWTYGIFLYEMIFGRTPFKGDNNEKTLVNILKAPLTFPKVIVNSPKEYEDMVNAQDLIIKLLVKNPKKRLGSLKGSIEIKRHEFFEGVNWALIRSIKPPWVPKEETSHKTKGDNRSVNYYLPPRFMMSRKERNEPYHVSNYFDYF.

The tract at residues 1–27 is disordered; sequence MANSSIFYKDNESDYESSTVGPDSSRR. Residues 87 to 465 enclose the Protein kinase domain; the sequence is FRLLKRLGSG…SIEIKRHEFF (379 aa). ATP-binding positions include 93–101 and Lys-118; that span reads LGSGDIGSV. The active-site Proton acceptor is Asp-214. The region spanning 466 to 525 is the AGC-kinase C-terminal domain; sequence EGVNWALIRSIKPPWVPKEETSHKTKGDNRSVNYYLPPRFMMSRKERNEPYHVSNYFDYF.

Belongs to the protein kinase superfamily. Ser/Thr protein kinase family.

It catalyses the reaction L-seryl-[protein] + ATP = O-phospho-L-seryl-[protein] + ADP + H(+). It carries out the reaction L-threonyl-[protein] + ATP = O-phospho-L-threonyl-[protein] + ADP + H(+). In terms of biological role, serine/threonine-protein kinase involved in the regulation of auxin signaling. Plays a minor role in the regulation of cellular auxin efflux and cotyledon organogenesis. This is Protein kinase PINOID 2 (PID2) from Arabidopsis thaliana (Mouse-ear cress).